A 400-amino-acid polypeptide reads, in one-letter code: CinA-like protein (400 aa).

It belongs to the CinA family.

The polypeptide is CinA-like protein (Escherichia coli (strain SMS-3-5 / SECEC)).